Consider the following 413-residue polypeptide: Tyrosine--tRNA ligase (413 aa).

Residues 59 to 68 (PTAPDIHLGH) carry the 'HIGH' region motif. Positions 243–247 (KMSKS) match the 'KMSKS' region motif. Residue lysine 246 participates in ATP binding. The S4 RNA-binding domain maps to 351-411 (LAIGQLLKQA…GKRRFARVTL (61 aa)).

This sequence belongs to the class-I aminoacyl-tRNA synthetase family. TyrS type 2 subfamily. In terms of assembly, homodimer.

It localises to the cytoplasm. It catalyses the reaction tRNA(Tyr) + L-tyrosine + ATP = L-tyrosyl-tRNA(Tyr) + AMP + diphosphate + H(+). Its function is as follows. Catalyzes the attachment of tyrosine to tRNA(Tyr) in a two-step reaction: tyrosine is first activated by ATP to form Tyr-AMP and then transferred to the acceptor end of tRNA(Tyr). This Burkholderia pseudomallei (strain K96243) protein is Tyrosine--tRNA ligase.